Here is a 583-residue protein sequence, read N- to C-terminus: Threonine--tRNA ligase (583 aa).

The tract at residues 185 to 478 is catalytic; the sequence is DHRKLGRELD…LVEHYGGAFP (294 aa). Residues Cys-278, His-329, and His-455 each contribute to the Zn(2+) site.

Belongs to the class-II aminoacyl-tRNA synthetase family. Homodimer. Requires Zn(2+) as cofactor.

The protein resides in the cytoplasm. It carries out the reaction tRNA(Thr) + L-threonine + ATP = L-threonyl-tRNA(Thr) + AMP + diphosphate + H(+). Its function is as follows. Catalyzes the attachment of threonine to tRNA(Thr) in a two-step reaction: L-threonine is first activated by ATP to form Thr-AMP and then transferred to the acceptor end of tRNA(Thr). Also edits incorrectly charged L-seryl-tRNA(Thr). The sequence is that of Threonine--tRNA ligase from Borrelia turicatae (strain 91E135).